A 254-amino-acid chain; its full sequence is E3 ubiquitin-protein ligase NEURL3 (254 aa).

An NHR domain is found at alanine 17–proline 174. An RING-type zinc finger spans residues cysteine 197–arginine 236.

The protein resides in the cytoplasm. The enzyme catalyses S-ubiquitinyl-[E2 ubiquitin-conjugating enzyme]-L-cysteine + [acceptor protein]-L-lysine = [E2 ubiquitin-conjugating enzyme]-L-cysteine + N(6)-ubiquitinyl-[acceptor protein]-L-lysine.. It participates in protein modification; protein ubiquitination. Its function is as follows. E3 ubiquitin-protein ligase that plays a role in various biological processes such as lung development or innate immunity. Seems to utilize UBE2E1. Promotes innate antiviral response by catalyzing 'Lys-63'-linked ubiquitination of IRF7. Also inhibits hepatitis C virus assembly by directly binding to viral E1 envelope glycoprotein to disrupt its interaction with E2. Plays an essential role in TLR4-mediated activation of MAPK pathways by promoting 'Lys-48'-linked polyubiquitination of the phosphatase DUSP1/MKP1. This chain is E3 ubiquitin-protein ligase NEURL3 (Neurl3), found in Rattus norvegicus (Rat).